The following is a 24-amino-acid chain: Humanin-like 1 (24 aa).

Belongs to the humanin family. Highly expressed in the kidney, heart muscle and testis.

The protein resides in the secreted. Its subcellular location is the cytoplasm. Functionally, plays a role as a neuroprotective and antiapoptotic factor. In Homo sapiens (Human), this protein is Humanin-like 1.